The sequence spans 440 residues: MADHEQEQEPLSIAIIGGGIIGLMTALGLLHRNIGKVTIYERASAWPDIGAAFAFTGIARECMQRLDPAILSALSKVAQRNPHDKVRYWDGFHPKSKEEAQDPEKSVLFEIEEKNMAYWACLRGVFHAEMARLLPERVVRFGKRLVAYEDGGDQKVVLRFEDGEVEEADIVIACDGVHSTARRVLLGAEHPAANARYSRKAVYRALVPMPAAIDALGTEKAHVQIAHCGPDAHIVSFPVNNAQIYNVFLFTHDSNEWTHGHTMTVPSSKEEILSAVENWGPHIKELASLFPEQLSKYAIFDQADHPLPYYAAGRVALAGDAAHASSPFHGAGACMGVEDALVLAELLEKVQNGSAFKEKKSNIELALKTYSDVRIERSQWLVKSSREMGDLYEWRYEDIGGDGVKCKAEWERRSRVIWDFDVQGMVDQAREAYERAVVKV.

Residues 10-30 (PLSIAIIGGGIIGLMTALGLL) traverse the membrane as a helical segment. FAD is bound by residues Glu41, Leu145, and Asp320. N-linked (GlcNAc...) asparagine glycosylation is present at Asn352.

It belongs to the paxM FAD-dependent monooxygenase family. FAD is required as a cofactor.

It localises to the membrane. Its function is as follows. FAD-dependent monooxygenase; part of the gene cluster that mediates the biosynthesis of asperfuranone, a probable antitumor agent. The polyketide synthase afoG is responsible for producing the 3,5-dimethyloctadienone moiety from acetyl-CoA, three malonyl-CoA, and two S-adenosyl methionines (SAM). The 3,5-dimethyloctadienone moiety is then loaded onto the SAT domain of afoE and extended with four malonyl-CoA and one SAM, which leads to the formation of 2,4-dihydroxy-6-(5,7-dimethyl-2-oxo-trans-3-trans-5-nonadienyl)-3-methylbenzaldehyde (compound 2) after reductive release and aldol condensation. AfoD is the next enzyme in the biosynthesis sequence and hydroxylates the side chain at the benzylic position of compound 2. After benzylic hydroxylation, a furan ring is formed after five-member ring hemiacetal formation and water elimination. AfoF and afoC are proposed to oxidize the R-diketone proton and to reduce the unconjugated carbonyl group, respectively, to generate asperfuranone. Since no intermediates could be isolated from afoF and afoC deletants, the sequence of these two enzymes is not fully understood. Moreover, since afoC deletant still produces a small amount of asperfuranone, other endogenous oxidoreductases might catalyze the same reaction with much less efficiency. In Emericella nidulans (strain FGSC A4 / ATCC 38163 / CBS 112.46 / NRRL 194 / M139) (Aspergillus nidulans), this protein is FAD-dependent monooxygenase afoD.